The following is a 157-amino-acid chain: 17.8 kDa class I heat shock protein (157 aa).

The sHSP domain maps to 41-156 (ETSAITNARV…KAQVKSIDIS (116 aa)).

Belongs to the small heat shock protein (HSP20) family. Homodimer under normal physiological conditions. Aggregates in high oligomeric complexes after heat shock. Binds to AKR2A and to chloroplasts. Expressed ubiquitously at low levels under normal physiological conditions.

The protein localises to the cytoplasm. Functionally, cytosolic mediator for sorting and targeting of nascent chloroplast outer envelope membrane (OEM) proteins to the chloroplast. Functions as an AKR2A cofactor to facilitate the targeting of OEP7 to chloroplasts. The protein is 17.8 kDa class I heat shock protein (HSP17.8) of Arabidopsis thaliana (Mouse-ear cress).